The primary structure comprises 55 residues: MAKDKDVRPIIKLKSTAGTGFTYVTRKNRRNNPDRITLKKYDPVVRKHVDFREER.

The protein belongs to the bacterial ribosomal protein bL33 family.

The protein is Large ribosomal subunit protein bL33 of Micrococcus luteus (strain ATCC 4698 / DSM 20030 / JCM 1464 / CCM 169 / CCUG 5858 / IAM 1056 / NBRC 3333 / NCIMB 9278 / NCTC 2665 / VKM Ac-2230) (Micrococcus lysodeikticus).